A 775-amino-acid chain; its full sequence is Homoaconitase, mitochondrial (775 aa).

A mitochondrion-targeting transit peptide spans 1–29 (MQSRLMPSGGPGRRWAFLRVPSTPQRRAF). Residues C392, C461, and C464 each coordinate [4Fe-4S] cluster.

It belongs to the aconitase/IPM isomerase family. The cofactor is [4Fe-4S] cluster.

It localises to the mitochondrion. It catalyses the reaction (2R,3S)-homoisocitrate = cis-homoaconitate + H2O. Its pathway is amino-acid biosynthesis; L-lysine biosynthesis via AAA pathway; L-alpha-aminoadipate from 2-oxoglutarate: step 3/5. Catalyzes the reversible hydration of cis-homoaconitate to (2R,3S)-homoisocitrate, a step in the alpha-aminoadipate pathway for lysine biosynthesis. This is Homoaconitase, mitochondrial (lys4) from Aspergillus oryzae (strain ATCC 42149 / RIB 40) (Yellow koji mold).